A 249-amino-acid chain; its full sequence is Sugar fermentation stimulation protein homolog (249 aa).

It belongs to the SfsA family.

The sequence is that of Sugar fermentation stimulation protein homolog from Rhizobium rhizogenes (strain K84 / ATCC BAA-868) (Agrobacterium radiobacter).